A 179-amino-acid polypeptide reads, in one-letter code: Large ribosomal subunit protein uL5 (179 aa).

The protein belongs to the universal ribosomal protein uL5 family. Part of the 50S ribosomal subunit; part of the 5S rRNA/L5/L18/L25 subcomplex. Contacts the 5S rRNA and the P site tRNA. Forms a bridge to the 30S subunit in the 70S ribosome.

This is one of the proteins that bind and probably mediate the attachment of the 5S RNA into the large ribosomal subunit, where it forms part of the central protuberance. In the 70S ribosome it contacts protein S13 of the 30S subunit (bridge B1b), connecting the 2 subunits; this bridge is implicated in subunit movement. Contacts the P site tRNA; the 5S rRNA and some of its associated proteins might help stabilize positioning of ribosome-bound tRNAs. The chain is Large ribosomal subunit protein uL5 from Rickettsia bellii (strain OSU 85-389).